The primary structure comprises 97 residues: Glutamyl-tRNA(Gln) amidotransferase subunit C (97 aa).

The protein belongs to the GatC family. As to quaternary structure, heterotrimer of A, B and C subunits.

It carries out the reaction L-glutamyl-tRNA(Gln) + L-glutamine + ATP + H2O = L-glutaminyl-tRNA(Gln) + L-glutamate + ADP + phosphate + H(+). The enzyme catalyses L-aspartyl-tRNA(Asn) + L-glutamine + ATP + H2O = L-asparaginyl-tRNA(Asn) + L-glutamate + ADP + phosphate + 2 H(+). Functionally, allows the formation of correctly charged Asn-tRNA(Asn) or Gln-tRNA(Gln) through the transamidation of misacylated Asp-tRNA(Asn) or Glu-tRNA(Gln) in organisms which lack either or both of asparaginyl-tRNA or glutaminyl-tRNA synthetases. The reaction takes place in the presence of glutamine and ATP through an activated phospho-Asp-tRNA(Asn) or phospho-Glu-tRNA(Gln). In Saccharolobus solfataricus (strain ATCC 35092 / DSM 1617 / JCM 11322 / P2) (Sulfolobus solfataricus), this protein is Glutamyl-tRNA(Gln) amidotransferase subunit C.